A 396-amino-acid chain; its full sequence is Immunoglobulin heavy constant gamma 4 (396 aa).

A CH1 region spans residues 1 to 98 (ASTKGPSVFP…PSNTKVDKRV (98 aa)). The Extracellular portion of the chain corresponds to 1–347 (ASTKGPSVFP…DGELDGLWTT (347 aa)). Ig-like domains follow at residues 6-99 (PSVF…KRVE), 118-217 (PSVF…KTIS), and 226-322 (PQVY…KSLS). The cysteines at positions 27 and 83 are disulfide-linked. The hinge stretch occupies residues 99–110 (ESKYGPPCPSCP). A CH2 region spans residues 111–220 (APEFLGGPSV…SIEKTISKAK (110 aa)). 2 disulfide bridges follow: cysteine 141/cysteine 201 and cysteine 247/cysteine 305. A glycan (N-linked (GlcNAc...) (complex) asparagine) is linked at asparagine 177. The CH3 stretch occupies residues 221 to 327 (GQPREPQVYT…QKSLSLSLEL (107 aa)). The helical transmembrane segment at 348–368 (ITIFITLFLLSVCYSATVTFF) threads the bilayer. The Cytoplasmic segment spans residues 369-396 (KVKWIFSSVVDLKQTIVPDYRNMIRQGA).

As to quaternary structure, immunoglobulins are composed of two identical heavy chains and two identical light chains; disulfide-linked. Glycosylation on Asn-177 is required for interaction with Fc receptors and ability to activate the complement pathway. Post-translationally, (Microbial infection) Deglycosylation on Asn-177 by S.pyogenes EndoS or Endos2 endoglucosidases prevents interaction between immunoglobulin-gamma (IgG) and Fc receptors, impairing ability to activate the complement pathway.

The protein resides in the secreted. It localises to the cell membrane. Its function is as follows. Constant region of immunoglobulin heavy chains. Immunoglobulins, also known as antibodies, are membrane-bound or secreted glycoproteins produced by B lymphocytes. In the recognition phase of humoral immunity, the membrane-bound immunoglobulins serve as receptors which, upon binding of a specific antigen, trigger the clonal expansion and differentiation of B lymphocytes into immunoglobulins-secreting plasma cells. Secreted immunoglobulins mediate the effector phase of humoral immunity, which results in the elimination of bound antigens. The antigen binding site is formed by the variable domain of one heavy chain, together with that of its associated light chain. Thus, each immunoglobulin has two antigen binding sites with remarkable affinity for a particular antigen. The variable domains are assembled by a process called V-(D)-J rearrangement and can then be subjected to somatic hypermutations which, after exposure to antigen and selection, allow affinity maturation for a particular antigen. This is Immunoglobulin heavy constant gamma 4 from Homo sapiens (Human).